Consider the following 161-residue polypeptide: E3 ubiquitin ligase complex SCF subunit sconC (161 aa).

Residues 102 to 161 (ILAANYLDIKPLLDIGCKTVANMIKGKSPEEIRKTFNIQNDFTPEEEDQIRRENEWAEDR) are interaction with the F-box domain of F-box proteins.

Belongs to the SKP1 family. In terms of assembly, component of the SCF (SKP1-CUL1-F-box protein) E3 ubiquitin ligase complexes.

It functions in the pathway protein modification; protein ubiquitination. Functionally, essential component of the SCF (SKP1-CUL1-F-box protein) E3 ubiquitin ligase complexes, which mediate the ubiquitination and subsequent proteasomal degradation of target proteins. Controls sulfur metabolite repression, probably by mediating the inactivation or degradation of the metR transcription factor. The protein is E3 ubiquitin ligase complex SCF subunit sconC (sconC) of Emericella nidulans (strain FGSC A4 / ATCC 38163 / CBS 112.46 / NRRL 194 / M139) (Aspergillus nidulans).